The primary structure comprises 313 residues: 2,3-dihydroxyphenylpropionate/2,3-dihydroxicinnamic acid 1,2-dioxygenase (313 aa).

The active-site Proton donor is histidine 115. Residue histidine 179 is the Proton acceptor of the active site.

It belongs to the LigB/MhpB extradiol dioxygenase family. Homotetramer. Requires Fe(2+) as cofactor.

It catalyses the reaction 3-(2,3-dihydroxyphenyl)propanoate + O2 = (2Z,4E)-2-hydroxy-6-oxonona-2,4-dienedioate + H(+). The catalysed reaction is (2E)-3-(2,3-dihydroxyphenyl)prop-2-enoate + O2 = (2Z,4E,7E)-2-hydroxy-6-oxonona-2,4,7-trienedioate + H(+). Its pathway is aromatic compound metabolism; 3-phenylpropanoate degradation. Catalyzes the non-heme iron(II)-dependent oxidative cleavage of 2,3-dihydroxyphenylpropionic acid and 2,3-dihydroxicinnamic acid into 2-hydroxy-6-ketononadienedioate and 2-hydroxy-6-ketononatrienedioate, respectively. The polypeptide is 2,3-dihydroxyphenylpropionate/2,3-dihydroxicinnamic acid 1,2-dioxygenase (Xanthobacter autotrophicus (strain ATCC BAA-1158 / Py2)).